Here is a 494-residue protein sequence, read N- to C-terminus: MAAAAECDVVMAATEPELLDDQEAKREAETFKEQGNAYYAKKDYNEAYNYYTKAIDMCPKNASYYGNRAATLMMLGRFREALGDAQQSVRLDDSFVRGHLREGKCHLSLGNAMAACRSFQRALELDHKNAQAQQEFKNANAVMEYEKIAETDFEKRDFRKVVFCMDRALEFAPACHRFKILKAECLAMLGRYPEAQSVASDILRMDSTNADALYVRGLCLYYEDCIEKAVQFFVQALRMAPDHEKACIACRNAKALKAKKEDGNKAFKEGNYKLAYELYTEALGIDPNNIKTNAKLYCNRGTVNSKLRKLDDAIEDCTNAVKLDDTYIKAYLRRAQCYMDTEQYEEAVRDYEKVYQTEKTKEHKQLLKNAQLELKKSKRKDYYKILGVDKNASEDEIKKAYRKRALMHHPDRHSGASAEVQKEEEKKFKEVGEAFTILSDPKKKTRYDSGQDLDEEGMNMGDFDPNNIFKAFFGGPGGFSFEASGPGNFFFQFG.

The residue at position 2 (Ala-2) is an N-acetylalanine. TPR repeat units lie at residues 28–61 (AETF…CPKN), 62–95 (ASYY…DDSF), 96–129 (VRGH…DHKN), 142–175 (VMEY…APAC), 177–209 (RFKI…DSTN), 210–243 (ADAL…APDH), 256–289 (LKAK…DPNN), 294–327 (AKLY…DDTY), and 328–361 (IKAY…EKTK). The 71-residue stretch at 381–451 (DYYKILGVDK…KKKTRYDSGQ (71 aa)) folds into the J domain. At Ser-393 the chain carries Phosphoserine.

In terms of assembly, associates with complexes containing chaperones HSP70 and HSP90. Interacts with the GAP domain of NF1. Interacts with HSP90AA1. Interacts with HSPA1A/B; the interaction is enhanced by ATP. Interacts with HSP90AB1. Interacts with PGR. Interacts with RAD9A; the interaction is interrupted by UV and heat shock treatments. Interacts with HUS1 and RAD1. Interacts with NR1I3. The DNAJC7-NR1I3 complex may also include HSP90. Interacts with HSPA8.

It localises to the cytoplasm. The protein localises to the nucleus. Its subcellular location is the cytoskeleton. In terms of biological role, acts as a co-chaperone regulating the molecular chaperones HSP70 and HSP90 in folding of steroid receptors, such as the glucocorticoid receptor and the progesterone receptor. Proposed to act as a recycling chaperone by facilitating the return of chaperone substrates to early stages of chaperoning if further folding is required. In vitro, induces ATP-independent dissociation of HSP90 but not of HSP70 from the chaperone-substrate complexes. Recruits NR1I3 to the cytoplasm. The sequence is that of DnaJ homolog subfamily C member 7 (DNAJC7) from Homo sapiens (Human).